A 399-amino-acid chain; its full sequence is Phosphoglycerate kinase (399 aa).

Substrate is bound by residues 22–24, R37, 60–63, R119, and R152; these read DLN and HFGR. ATP contacts are provided by residues K202, E324, and 354–357; that span reads GGDT.

Belongs to the phosphoglycerate kinase family. In terms of assembly, monomer.

The protein localises to the cytoplasm. The enzyme catalyses (2R)-3-phosphoglycerate + ATP = (2R)-3-phospho-glyceroyl phosphate + ADP. The protein operates within carbohydrate degradation; glycolysis; pyruvate from D-glyceraldehyde 3-phosphate: step 2/5. The polypeptide is Phosphoglycerate kinase (Sinorhizobium fredii (strain NBRC 101917 / NGR234)).